The primary structure comprises 303 residues: Proline dehydrogenase 2 (303 aa).

Lysine 96 provides a ligand contact to substrate. Aspartate 130 is an active-site residue. FAD is bound by residues methionine 131 and glutamine 159. Arginine 180 is an active-site residue. FAD is bound by residues 183–185 (KGA) and 222–223 (TH). 284-285 (RR) is a substrate binding site.

Belongs to the proline dehydrogenase family. The cofactor is FAD.

The enzyme catalyses L-proline + a quinone = (S)-1-pyrroline-5-carboxylate + a quinol + H(+). It functions in the pathway amino-acid degradation; L-proline degradation into L-glutamate; L-glutamate from L-proline: step 1/2. Functionally, converts proline to delta-1-pyrroline-5-carboxylate. Important for the use of proline as a sole carbon and energy source or a sole nitrogen source. The protein is Proline dehydrogenase 2 of Bacillus subtilis (strain 168).